Reading from the N-terminus, the 94-residue chain is Core protein OPG142 (94 aa).

The protein belongs to the orthopoxvirus OPG142 family. In terms of assembly, part of a complex composed of the kinase OPG054, OPG092, OPG100, OPG114, OPG115, OPG142 and OPG157.

The protein localises to the host cytoplasm. It is found in the virion. Late protein which is a part of a large complex required for early virion morphogenesis. This complex participates in the formation of virosomes and the incorporation of virosomal contents into nascent immature virions. Required for the stability and kinase activity of OPG054. The polypeptide is Core protein OPG142 (OPG142) (Homo sapiens (Human)).